We begin with the raw amino-acid sequence, 1740 residues long: DNA polymerase (1740 aa).

The tract at residues 472 to 491 (IEMPHNQEDSDSEKEDEDTD) is disordered. Residues 480-491 (DSDSEKEDEDTD) are compositionally biased toward acidic residues. The region spanning 1189–1334 (VWGFFMGDGS…LFYLLKSLGY (146 aa)) is the DOD-type homing endonuclease domain. The tract at residues 1673-1701 (PKESGSKTAKKPYQSQKLQKTKSSNKSQI) is disordered. A compositionally biased stretch (polar residues) spans 1685–1700 (YQSQKLQKTKSSNKSQ).

It belongs to the DNA polymerase type-B family. This protein undergoes a protein self splicing that involves a post-translational excision of the intervening region (intein) followed by peptide ligation.

The catalysed reaction is DNA(n) + a 2'-deoxyribonucleoside 5'-triphosphate = DNA(n+1) + diphosphate. This is DNA polymerase (POLB) from Acanthamoeba polyphaga (Amoeba).